A 494-amino-acid polypeptide reads, in one-letter code: UDP-N-acetylmuramoyl-L-alanyl-D-glutamate--2,6-diaminopimelate ligase (494 aa).

Serine 30 provides a ligand contact to UDP-N-acetyl-alpha-D-muramoyl-L-alanyl-D-glutamate. Position 110-116 (110-116 (GTNGKTS)) interacts with ATP. Residues 152–153 (TT), serine 179, and arginine 187 contribute to the UDP-N-acetyl-alpha-D-muramoyl-L-alanyl-D-glutamate site. At lysine 219 the chain carries N6-carboxylysine. Meso-2,6-diaminopimelate is bound by residues arginine 380, 404–407 (DNPR), glycine 456, and glutamate 460. The Meso-diaminopimelate recognition motif signature appears at 404–407 (DNPR).

The protein belongs to the MurCDEF family. MurE subfamily. The cofactor is Mg(2+). In terms of processing, carboxylation is probably crucial for Mg(2+) binding and, consequently, for the gamma-phosphate positioning of ATP.

The protein localises to the cytoplasm. It carries out the reaction UDP-N-acetyl-alpha-D-muramoyl-L-alanyl-D-glutamate + meso-2,6-diaminopimelate + ATP = UDP-N-acetyl-alpha-D-muramoyl-L-alanyl-gamma-D-glutamyl-meso-2,6-diaminopimelate + ADP + phosphate + H(+). It participates in cell wall biogenesis; peptidoglycan biosynthesis. Its function is as follows. Catalyzes the addition of meso-diaminopimelic acid to the nucleotide precursor UDP-N-acetylmuramoyl-L-alanyl-D-glutamate (UMAG) in the biosynthesis of bacterial cell-wall peptidoglycan. The polypeptide is UDP-N-acetylmuramoyl-L-alanyl-D-glutamate--2,6-diaminopimelate ligase (Alkaliphilus metalliredigens (strain QYMF)).